The sequence spans 182 residues: ATP synthase subunit b, chloroplastic (182 aa).

The chain crosses the membrane as a helical span at residues 36–56; that stretch reads ILLLLLGLMYVLKEFLGSILV.

It belongs to the ATPase B chain family. As to quaternary structure, F-type ATPases have 2 components, F(1) - the catalytic core - and F(0) - the membrane proton channel. F(1) has five subunits: alpha(3), beta(3), gamma(1), delta(1), epsilon(1). F(0) has four main subunits: a(1), b(1), b'(1) and c(10-14). The alpha and beta chains form an alternating ring which encloses part of the gamma chain. F(1) is attached to F(0) by a central stalk formed by the gamma and epsilon chains, while a peripheral stalk is formed by the delta, b and b' chains.

The protein resides in the plastid. It is found in the chloroplast thylakoid membrane. In terms of biological role, f(1)F(0) ATP synthase produces ATP from ADP in the presence of a proton or sodium gradient. F-type ATPases consist of two structural domains, F(1) containing the extramembraneous catalytic core and F(0) containing the membrane proton channel, linked together by a central stalk and a peripheral stalk. During catalysis, ATP synthesis in the catalytic domain of F(1) is coupled via a rotary mechanism of the central stalk subunits to proton translocation. Functionally, component of the F(0) channel, it forms part of the peripheral stalk, linking F(1) to F(0). This Gracilaria tenuistipitata var. liui (Red alga) protein is ATP synthase subunit b, chloroplastic.